Reading from the N-terminus, the 295-residue chain is sn-glycerol-3-phosphate transport system permease protein UgpA (295 aa).

The Cytoplasmic portion of the chain corresponds to 1–11; sequence MSSFRPVFRSR. The chain crosses the membrane as a helical span at residues 12–32; that stretch reads WLPYLLVAPQLVITVIFFIWP. Topologically, residues 33 to 80 are periplasmic; it reads AGEALWYSLQSVDPFGFSSQFVGLENFVALFHDSYYLDAFWTTIKFSA. An ABC transmembrane type-1 domain is found at 76 to 284; the sequence is IKFSALVTFS…FLVIILTVVQ (209 aa). The chain crosses the membrane as a helical span at residues 81-101; it reads LVTFSGLLVSLFFAALVDYVV. Residues 102–109 are Cytoplasmic-facing; it reads RGSRFYQT. Residues 110–130 traverse the membrane as a helical segment; it reads LMLLPYAVAPAVAAVLWIFLF. Residues 131-157 are Periplasmic-facing; that stretch reads NPGRGLITHFLGEFGYDWNHAQNSGQA. Residues 158-178 form a helical membrane-spanning segment; it reads MFLVVFASVWKQISYNFLFFF. At 179–207 the chain is on the cytoplasmic side; it reads AALQSIPRSLVEAAAIDGAGPIRRFFRLS. Residues 208–228 traverse the membrane as a helical segment; the sequence is LPLIAPVSFFLLVVNLVYAFF. The Periplasmic portion of the chain corresponds to 229–262; sequence DTFPVIDAATAGGPVQATTTLIYKIYREGFTGLD. The chain crosses the membrane as a helical span at residues 263-283; sequence LSASAAQSVVLMFLVIILTVV. Residues 284-295 are Cytoplasmic-facing; that stretch reads QFRYVESKVRYQ.

The protein belongs to the binding-protein-dependent transport system permease family. UgpAE subfamily. As to quaternary structure, the complex is composed of two ATP-binding proteins (UgpC), two transmembrane proteins (UgpA and UgpE) and a solute-binding protein (UgpB).

The protein localises to the cell inner membrane. Part of the ABC transporter complex UgpBAEC involved in sn-glycerol-3-phosphate (G3P) import. Probably responsible for the translocation of the substrate across the membrane. In Salmonella choleraesuis (strain SC-B67), this protein is sn-glycerol-3-phosphate transport system permease protein UgpA (ugpA).